We begin with the raw amino-acid sequence, 313 residues long: Ethylene-responsive transcription factor ERN2 (313 aa).

The span at 1–10 (MEIQFDEPKK) shows a compositional bias: basic and acidic residues. Residues 1-29 (MEIQFDEPKKSLRPKKVNKFKGRNKKSET) are disordered. The span at 11-24 (SLRPKKVNKFKGRN) shows a compositional bias: basic residues. Residues 32 to 89 (KFVGVRQRPSGRYVAEIKDTTQNIRMWLGTFETAEEAARAYDEAATLLRGSKTRTNFV) constitute a DNA-binding region (AP2/ERF). Disordered regions lie at residues 108–143 (NRKK…TSST) and 157–204 (TSAS…SSST). Composition is skewed to low complexity over residues 122-143 (SSTT…TSST) and 157-193 (TSAS…TNVN).

It belongs to the AP2/ERF transcription factor family. ERF subfamily. As to expression, expressed in roots, root hairs and leaves. Expressed in root epidermis and root hairs.

The protein localises to the nucleus. Functionally, transcription factor involved in symbiotic nodule signaling in response to rhizobial Nod factors (NFs). Binds to the GCC box (NF-responsive box) of ENOD11 promoter. Acts as a transcriptional activator of NF-responsive box-containing target gene promoters in root hairs. Involved in early stages of root nodule development. Functions redundantly with ERN1. Is essential with ERN1 for the initiation of root hair infection, and nodule organogenesis and development. Required for accurate expression of the NF signaling genes ENOD11 and ENOD12. The protein is Ethylene-responsive transcription factor ERN2 of Medicago truncatula (Barrel medic).